We begin with the raw amino-acid sequence, 290 residues long: Light-independent protochlorophyllide reductase iron-sulfur ATP-binding protein (290 aa).

ATP contacts are provided by residues 10-15 and Lys39; that span reads GIGKST. Ser14 serves as a coordination point for Mg(2+). [4Fe-4S] cluster-binding residues include Cys95 and Cys129. 180-181 lines the ATP pocket; sequence NR.

Belongs to the NifH/BchL/ChlL family. In terms of assembly, homodimer. Protochlorophyllide reductase is composed of three subunits; ChlL, ChlN and ChlB. [4Fe-4S] cluster is required as a cofactor.

It localises to the plastid. The protein resides in the chloroplast. The enzyme catalyses chlorophyllide a + oxidized 2[4Fe-4S]-[ferredoxin] + 2 ADP + 2 phosphate = protochlorophyllide a + reduced 2[4Fe-4S]-[ferredoxin] + 2 ATP + 2 H2O. Its pathway is porphyrin-containing compound metabolism; chlorophyll biosynthesis (light-independent). Functionally, component of the dark-operative protochlorophyllide reductase (DPOR) that uses Mg-ATP and reduced ferredoxin to reduce ring D of protochlorophyllide (Pchlide) to form chlorophyllide a (Chlide). This reaction is light-independent. The L component serves as a unique electron donor to the NB-component of the complex, and binds Mg-ATP. This chain is Light-independent protochlorophyllide reductase iron-sulfur ATP-binding protein, found in Zygnema circumcarinatum (Green alga).